Here is a 195-residue protein sequence, read N- to C-terminus: Molybdenum cofactor guanylyltransferase (195 aa).

Residues 12–14 (LAG), lysine 25, asparagine 53, aspartate 70, and aspartate 100 each bind GTP. Aspartate 100 serves as a coordination point for Mg(2+).

It belongs to the MobA family. As to quaternary structure, monomer. The cofactor is Mg(2+).

It is found in the cytoplasm. It catalyses the reaction Mo-molybdopterin + GTP + H(+) = Mo-molybdopterin guanine dinucleotide + diphosphate. Transfers a GMP moiety from GTP to Mo-molybdopterin (Mo-MPT) cofactor (Moco or molybdenum cofactor) to form Mo-molybdopterin guanine dinucleotide (Mo-MGD) cofactor. This chain is Molybdenum cofactor guanylyltransferase, found in Vibrio campbellii (strain ATCC BAA-1116).